Here is a 182-residue protein sequence, read N- to C-terminus: Large ribosomal subunit protein uL10 (182 aa).

This sequence belongs to the universal ribosomal protein uL10 family. In terms of assembly, part of the ribosomal stalk of the 50S ribosomal subunit. The N-terminus interacts with L11 and the large rRNA to form the base of the stalk. The C-terminus forms an elongated spine to which L12 dimers bind in a sequential fashion forming a multimeric L10(L12)X complex.

Its function is as follows. Forms part of the ribosomal stalk, playing a central role in the interaction of the ribosome with GTP-bound translation factors. This Herminiimonas arsenicoxydans protein is Large ribosomal subunit protein uL10.